We begin with the raw amino-acid sequence, 179 residues long: NADH dehydrogenase [ubiquinone] 1 beta subcomplex subunit 9 (179 aa).

N-acetylalanine is present on Ala2. Ser85 carries the post-translational modification Phosphoserine.

It belongs to the complex I LYR family. As to quaternary structure, mammalian complex I is composed of 45 different subunits.

It is found in the mitochondrion inner membrane. Its function is as follows. Accessory subunit of the mitochondrial membrane respiratory chain NADH dehydrogenase (Complex I), that is believed to be not involved in catalysis. Complex I functions in the transfer of electrons from NADH to the respiratory chain. The immediate electron acceptor for the enzyme is believed to be ubiquinone. In Mus musculus (Mouse), this protein is NADH dehydrogenase [ubiquinone] 1 beta subcomplex subunit 9 (Ndufb9).